We begin with the raw amino-acid sequence, 67 residues long: Conotoxin ArMLKM-01 (67 aa).

Residues 1–24 form the signal peptide; it reads MLKMEVVLFTFLVLFPLSTLQLET. The propeptide occupies 25–51; sequence DQPVERYVENKQDLNPDESRNFMLPIV. 3 disulfide bridges follow: C54-C65, C55-C63, and C58-C66.

It belongs to the conotoxin M superfamily. As to expression, expressed by the venom duct.

The protein localises to the secreted. The polypeptide is Conotoxin ArMLKM-01 (Conus arenatus (Sand-dusted cone)).